Consider the following 333-residue polypeptide: Phosphoribosylformylglycinamidine cyclo-ligase (333 aa).

Belongs to the AIR synthase family.

The protein resides in the cytoplasm. It carries out the reaction 2-formamido-N(1)-(5-O-phospho-beta-D-ribosyl)acetamidine + ATP = 5-amino-1-(5-phospho-beta-D-ribosyl)imidazole + ADP + phosphate + H(+). The protein operates within purine metabolism; IMP biosynthesis via de novo pathway; 5-amino-1-(5-phospho-D-ribosyl)imidazole from N(2)-formyl-N(1)-(5-phospho-D-ribosyl)glycinamide: step 2/2. The chain is Phosphoribosylformylglycinamidine cyclo-ligase from Methanococcoides burtonii (strain DSM 6242 / NBRC 107633 / OCM 468 / ACE-M).